Reading from the N-terminus, the 165-residue chain is UPF0262 protein blr1257 (165 aa).

Belongs to the UPF0262 family.

This chain is UPF0262 protein blr1257, found in Bradyrhizobium diazoefficiens (strain JCM 10833 / BCRC 13528 / IAM 13628 / NBRC 14792 / USDA 110).